A 207-amino-acid chain; its full sequence is uncharacterized protein (207 aa).

Disordered stretches follow at residues 1 to 81 (MNPT…GNTR) and 140 to 169 (TSQSIDAQPTPSQHPLAHHEPHEKRGPPKK). Over residues 21–40 (FEQTNSSASLTQKNSSSETE) the composition is skewed to polar residues. The span at 58 to 70 (PTKRGSGRGRGRS) shows a compositional bias: basic residues. Residues 140–152 (TSQSIDAQPTPSQ) show a composition bias toward polar residues. Residues 156-165 (AHHEPHEKRG) are compositionally biased toward basic and acidic residues.

Its subcellular location is the nucleus. It is found in the nucleolus. This is an uncharacterized protein from Schizosaccharomyces pombe (strain 972 / ATCC 24843) (Fission yeast).